We begin with the raw amino-acid sequence, 352 residues long: Pollen-specific protein SF21 (352 aa).

This sequence belongs to the NDRG family. In terms of tissue distribution, pollen.

The sequence is that of Pollen-specific protein SF21 (SF21) from Helianthus annuus (Common sunflower).